The primary structure comprises 303 residues: Cytosolic-abundant heat soluble protein 3 (303 aa).

The segment covering 1 to 19 (MSSRQNQQSSSQHSSSSQQ) has biased composition (low complexity). The segment at 1 to 67 (MSSRQNQQSS…PGSHSEVHEE (67 aa)) is disordered. Positions 170-257 (ARQDEQDAGM…ESAKAQTNVN (88 aa)) form a coiled coil. CAHS motif regions lie at residues 184–202 (YREE…LERQ) and 221–239 (QERE…LELE). Residues 270–280 (KGAIQTSADKS) show a composition bias toward polar residues. Residues 270–303 (KGAIQTSADKSSTTKTGPTTVTQIKHTEQHTERR) form a disordered region. The segment covering 282-291 (TTKTGPTTVT) has biased composition (low complexity). The span at 294–303 (KHTEQHTERR) shows a compositional bias: basic and acidic residues.

The protein belongs to the Cytosolic-abundant heat soluble protein (CAHS) family.

The protein resides in the cytoplasm. Its function is as follows. CAHS proteins are cytosolic heat soluble proteins that seem to contribute to the anhydrobiosis in tardigrades, but their specific mechanisms are yet to be identified. It is possible that protection during anhydrobiosis might occur via the stabilization of vitrifying small molecules such as sugars, but not via the direct glass transition of CAHS proteins themselves. This is Cytosolic-abundant heat soluble protein 3 from Ramazzottius varieornatus (Water bear).